The primary structure comprises 132 residues: Keratin, high-sulfur matrix protein, IIIA3 (132 aa).

In terms of biological role, the keratin products of mammalian epidermal derivatives such as wool and hair consist of microfibrils embedded in a rigid matrix of other proteins. The matrix proteins include the high-sulfur and high-tyrosine keratins, having molecular weights of 6-20 kDa, whereas the microfibrils contain the larger, low-sulfur keratins (40-56 kDa). The polypeptide is Keratin, high-sulfur matrix protein, IIIA3 (Capra hircus (Goat)).